A 511-amino-acid chain; its full sequence is Pancreatic alpha-amylase (511 aa).

Positions 1-15 (MKFFLLLFTIGFCWA) are cleaved as a signal peptide. Glutamine 16 carries the pyrrolidone carboxylic acid modification. Intrachain disulfides connect cysteine 43/cysteine 101, cysteine 85/cysteine 130, and cysteine 156/cysteine 175. Residues asparagine 115, arginine 173, and aspartate 182 each contribute to the Ca(2+) site. Arginine 210 serves as a coordination point for chloride. Residue aspartate 212 is the Nucleophile of the active site. Histidine 216 serves as a coordination point for Ca(2+). The active-site Proton donor is glutamate 248. Residues asparagine 313 and arginine 352 each coordinate chloride. 2 disulfide bridges follow: cysteine 393-cysteine 399 and cysteine 465-cysteine 477. Residue asparagine 476 is glycosylated (N-linked (GlcNAc...) asparagine).

The protein belongs to the glycosyl hydrolase 13 family. In terms of assembly, monomer. Binds to the sea anemone inhibitor helianthamide. Requires Ca(2+) as cofactor. Chloride serves as cofactor. As to expression, detected in pancreas (at protein level).

It is found in the secreted. It localises to the extracellular space. The catalysed reaction is Endohydrolysis of (1-&gt;4)-alpha-D-glucosidic linkages in polysaccharides containing three or more (1-&gt;4)-alpha-linked D-glucose units.. This is Pancreatic alpha-amylase (AMY2A) from Homo sapiens (Human).